The sequence spans 313 residues: Ribosomal RNA small subunit methyltransferase H (313 aa).

S-adenosyl-L-methionine is bound by residues 35 to 37 (GGH), D55, F79, D101, and Q108.

This sequence belongs to the methyltransferase superfamily. RsmH family.

The protein localises to the cytoplasm. The enzyme catalyses cytidine(1402) in 16S rRNA + S-adenosyl-L-methionine = N(4)-methylcytidine(1402) in 16S rRNA + S-adenosyl-L-homocysteine + H(+). Its function is as follows. Specifically methylates the N4 position of cytidine in position 1402 (C1402) of 16S rRNA. This Klebsiella pneumoniae (strain 342) protein is Ribosomal RNA small subunit methyltransferase H.